The chain runs to 376 residues: Protein-glutamate methylesterase/protein-glutamine glutaminase (376 aa).

One can recognise a Response regulatory domain in the interval 4 to 121 (KVLVVDDSSF…ARNRDEAVSL (118 aa)). Aspartate 55 is subject to 4-aspartylphosphate. The segment at 142-161 (SSQSTSTVESRTATTRTATS) is disordered. Positions 145 to 161 (STSTVESRTATTRTATS) are enriched in low complexity. The region spanning 183–376 (TGKKYQLTAI…ERMLVEVGLK (194 aa)) is the CheB-type methylesterase domain. Catalysis depends on residues serine 195, histidine 222, and aspartate 318.

Belongs to the CheB family. Post-translationally, phosphorylated by CheA. Phosphorylation of the N-terminal regulatory domain activates the methylesterase activity.

It is found in the cytoplasm. It catalyses the reaction [protein]-L-glutamate 5-O-methyl ester + H2O = L-glutamyl-[protein] + methanol + H(+). The catalysed reaction is L-glutaminyl-[protein] + H2O = L-glutamyl-[protein] + NH4(+). In terms of biological role, involved in chemotaxis. Part of a chemotaxis signal transduction system that modulates chemotaxis in response to various stimuli. Catalyzes the demethylation of specific methylglutamate residues introduced into the chemoreceptors (methyl-accepting chemotaxis proteins or MCP) by CheR. Also mediates the irreversible deamidation of specific glutamine residues to glutamic acid. The polypeptide is Protein-glutamate methylesterase/protein-glutamine glutaminase (Aliivibrio fischeri (strain ATCC 700601 / ES114) (Vibrio fischeri)).